The following is a 203-amino-acid chain: MTPLYLASGSPRRRELLTQIGVPFIVISAPVDESPLPSESAPAYVERLARAKAAAGLVSVDGPAVVLGADTAVVLDGRILGKPENREDALAMLADLSGREHQVLTAVALDDGQRVHSFCVTSTVRFRAISTDEAQRYWASGEPSDKAGGYAIQGLGAVFVSGLSGSYSAVVGLPLCETADLLGQFGIACWQSLAHTPEVTNPQ.

Asp70 serves as the catalytic Proton acceptor.

The protein belongs to the Maf family. YhdE subfamily. A divalent metal cation is required as a cofactor.

It localises to the cytoplasm. It catalyses the reaction dTTP + H2O = dTMP + diphosphate + H(+). The enzyme catalyses UTP + H2O = UMP + diphosphate + H(+). Functionally, nucleoside triphosphate pyrophosphatase that hydrolyzes dTTP and UTP. May have a dual role in cell division arrest and in preventing the incorporation of modified nucleotides into cellular nucleic acids. In Pseudomonas putida (strain ATCC 47054 / DSM 6125 / CFBP 8728 / NCIMB 11950 / KT2440), this protein is dTTP/UTP pyrophosphatase (maf-1).